The chain runs to 371 residues: Probable acetylxylan esterase A (371 aa).

The first 19 residues, Met1–Ala19, serve as a signal peptide directing secretion. Residues Gly32–Phe304 are catalytic. Residue Ser149 is the Charge relay system of the active site. An N-linked (GlcNAc...) asparagine glycan is attached at Asn191. Positions Thr305 to Gly335 are disordered. Positions Thr305–Val336 are ser/Thr-rich linker. Residues Gly307–Gly335 show a composition bias toward low complexity. The 37-residue stretch at Gly335–Leu371 folds into the CBM1 domain.

This sequence belongs to the carbohydrate esterase 1 (CE1) family. AxeA subfamily. In terms of assembly, monomer.

Its subcellular location is the secreted. The catalysed reaction is Deacetylation of xylans and xylo-oligosaccharides.. It functions in the pathway glycan degradation; xylan degradation. In terms of biological role, acetylxylan esterase involved in the hydrolysis of xylan, a major structural heterogeneous polysaccharide found in plant biomass representing the second most abundant polysaccharide in the biosphere, after cellulose. Degrades acetylated xylans by cleaving acetyl side groups from the hetero-xylan backbone. This is Probable acetylxylan esterase A (axeA) from Aspergillus fumigatus (strain ATCC MYA-4609 / CBS 101355 / FGSC A1100 / Af293) (Neosartorya fumigata).